Here is a 597-residue protein sequence, read N- to C-terminus: Cytosolic Fe-S cluster assembly factor nar1 (597 aa).

Residues C20, C62, C65, C68, C216, and C271 each coordinate [4Fe-4S] cluster. Positions 428 to 449 (RASRLPGGNRRLPVGRGAASGS) are disordered. Residues C462 and C466 each contribute to the [4Fe-4S] cluster site. The disordered stretch occupies residues 479–505 (REASSSVQSSTSAEVPDSSSKPTPHEQ).

The protein belongs to the NARF family.

Component of the cytosolic Fe/S protein assembly machinery. Required for maturation of extramitochondrial Fe/S proteins. May play a role in the transfer of pre-assembled Fe/S clusters to target apoproteins. The protein is Cytosolic Fe-S cluster assembly factor nar1 (nar1) of Aspergillus niger (strain ATCC MYA-4892 / CBS 513.88 / FGSC A1513).